Here is a 242-residue protein sequence, read N- to C-terminus: Terpene cyclase cle7 (242 aa).

The next 7 helical transmembrane spans lie at 20–40 (LLLT…ITTI), 50–69 (GVSL…FAIL), 79–101 (VILR…FARS), 117–137 (LFVL…SVLL), 143–163 (FYWS…GILV), 172–192 (SYGM…SLFL), and 207–227 (ILMR…GVCF).

It belongs to the paxB family.

Its subcellular location is the membrane. The protein operates within secondary metabolite biosynthesis; terpenoid biosynthesis. Non-reducing polyketide synthase; part of the cluster A that mediates the biosynthesis of chevalone E and its oxidized derivatives that possess a unique five-membered lactone ring and can synergistically enhance the cytotoxicity of doxorubicin (DOX) in breast cancer cells. Within the pathway, cle7 takes part to the biosynthesis of the molecular scaffold by catalyzing the cyclization of the prenyl group initiated by protonation and ring-opening of the epoxide to produce the chevalone E intermediate. The molecular scaffold is commonly biosynthesized by a series of enzymes including the non-reducing polyketide synthase (NR-PKS) cle1 that produces the alpha-pyrone triacetic acid lactone (TAL); The membrane-bound prenyltransferase cle5 that accepts TAL as its substrate to perform a C-3 geranylgeranylation reaction, in which the pathway-dedicated GGPS cle6 is required to provide GGPP, the other substrate of cle5; the FAD-dependent monooxygenase Cle3 that forms an (S)-epoxide ring at the terminal olefin of the geranylgeranyl group; and the terpene cyclase Cle7 that catalyzes the cyclization of the prenyl group that yields the pentacyclic pathway intermediate chevalone E. Chevalone E can derivatize into seven new oxidized analogs by the cytochrome P450 monooxygenases cle2 (acting at C-20) and cle4 (acting at C-11 and C-12). This Aspergillus versicolor protein is Terpene cyclase cle7.